Consider the following 336-residue polypeptide: Dihydroorotate dehydrogenase (quinone) (336 aa).

FMN-binding positions include 62–66 (AGLDK) and Thr86. A substrate-binding site is contributed by Lys66. Residue 111–115 (NRMGF) participates in substrate binding. FMN contacts are provided by Asn139 and Asn172. Residue Asn172 coordinates substrate. Ser175 (nucleophile) is an active-site residue. Residue Asn177 coordinates substrate. 2 residues coordinate FMN: Lys217 and Thr245. 246–247 (NT) contacts substrate. FMN-binding positions include Gly268, Gly297, and 318 to 319 (YS).

Belongs to the dihydroorotate dehydrogenase family. Type 2 subfamily. In terms of assembly, monomer. FMN serves as cofactor.

The protein localises to the cell membrane. It carries out the reaction (S)-dihydroorotate + a quinone = orotate + a quinol. It functions in the pathway pyrimidine metabolism; UMP biosynthesis via de novo pathway; orotate from (S)-dihydroorotate (quinone route): step 1/1. Functionally, catalyzes the conversion of dihydroorotate to orotate with quinone as electron acceptor. The sequence is that of Dihydroorotate dehydrogenase (quinone) from Shigella flexneri serotype 5b (strain 8401).